The primary structure comprises 894 residues: Bifunctional enzyme RhaA/RhaB (894 aa).

The interval 1 to 465 (MGEYRLAVDI…TAFPVTYFLP (465 aa)) is rhamnulokinase. The L-rhamnose isomerase stretch occupies residues 466–894 (QRSESHVSSR…KRESEKAKQR (429 aa)). Mn(2+)-binding residues include H730, D762, and D764.

In the N-terminal section; belongs to the rhamnulokinase family. It in the C-terminal section; belongs to the rhamnose isomerase family. Mn(2+) is required as a cofactor.

The protein localises to the cytoplasm. It catalyses the reaction L-rhamnulose + ATP = L-rhamnulose 1-phosphate + ADP + H(+). The enzyme catalyses L-rhamnopyranose = L-rhamnulose. It participates in carbohydrate degradation; L-rhamnose degradation; glycerone phosphate from L-rhamnose: step 1/3. The protein operates within carbohydrate degradation; L-rhamnose degradation; glycerone phosphate from L-rhamnose: step 2/3. This chain is Bifunctional enzyme RhaA/RhaB (rhaAB), found in Shouchella clausii (strain KSM-K16) (Alkalihalobacillus clausii).